The chain runs to 470 residues: ATP synthase subunit beta (470 aa).

Position 155–162 (155–162 (GGAGVGKT)) interacts with ATP.

It belongs to the ATPase alpha/beta chains family. F-type ATPases have 2 components, CF(1) - the catalytic core - and CF(0) - the membrane proton channel. CF(1) has five subunits: alpha(3), beta(3), gamma(1), delta(1), epsilon(1). CF(0) has three main subunits: a(1), b(2) and c(9-12). The alpha and beta chains form an alternating ring which encloses part of the gamma chain. CF(1) is attached to CF(0) by a central stalk formed by the gamma and epsilon chains, while a peripheral stalk is formed by the delta and b chains.

Its subcellular location is the cell inner membrane. The enzyme catalyses ATP + H2O + 4 H(+)(in) = ADP + phosphate + 5 H(+)(out). In terms of biological role, produces ATP from ADP in the presence of a proton gradient across the membrane. The catalytic sites are hosted primarily by the beta subunits. The protein is ATP synthase subunit beta of Oleidesulfovibrio alaskensis (strain ATCC BAA-1058 / DSM 17464 / G20) (Desulfovibrio alaskensis).